We begin with the raw amino-acid sequence, 632 residues long: MAU2 chromatid cohesion factor homolog (632 aa).

TPR repeat units follow at residues 453-486 and 493-526; these read GGFY…ANAE and SCSL…ASKI.

Belongs to the SCC4/mau-2 family. Interacts with Nipped-B to form the cohesin loading complex.

It localises to the nucleus. The protein localises to the nucleoplasm. In terms of biological role, required for association of the cohesin complex with chromatin during interphase. Plays a role in sister chromatid cohesion and normal progression through prometaphase. The protein is MAU2 chromatid cohesion factor homolog of Drosophila yakuba (Fruit fly).